A 349-amino-acid polypeptide reads, in one-letter code: UPF0284 protein MM_0708 (349 aa).

Belongs to the UPF0284 family.

The chain is UPF0284 protein MM_0708 from Methanosarcina mazei (strain ATCC BAA-159 / DSM 3647 / Goe1 / Go1 / JCM 11833 / OCM 88) (Methanosarcina frisia).